The following is a 223-amino-acid chain: Endonuclease V (223 aa).

Residues Asp-35 and Asp-103 each coordinate Mg(2+).

It belongs to the endonuclease V family. Requires Mg(2+) as cofactor.

It localises to the cytoplasm. It carries out the reaction Endonucleolytic cleavage at apurinic or apyrimidinic sites to products with a 5'-phosphate.. Its function is as follows. DNA repair enzyme involved in the repair of deaminated bases. Selectively cleaves double-stranded DNA at the second phosphodiester bond 3' to a deoxyinosine leaving behind the intact lesion on the nicked DNA. This Shigella dysenteriae serotype 1 (strain Sd197) protein is Endonuclease V.